A 219-amino-acid polypeptide reads, in one-letter code: Ribose-5-phosphate isomerase A (219 aa).

Residues Thr-28–Thr-31, Asp-81–Asp-84, and Lys-94–Gly-97 each bind substrate. Glu-103 serves as the catalytic Proton acceptor. Lys-121 is a binding site for substrate.

It belongs to the ribose 5-phosphate isomerase family. In terms of assembly, homodimer.

The catalysed reaction is aldehydo-D-ribose 5-phosphate = D-ribulose 5-phosphate. Its pathway is carbohydrate degradation; pentose phosphate pathway; D-ribose 5-phosphate from D-ribulose 5-phosphate (non-oxidative stage): step 1/1. Its function is as follows. Catalyzes the reversible conversion of ribose-5-phosphate to ribulose 5-phosphate. The chain is Ribose-5-phosphate isomerase A from Acidithiobacillus ferrooxidans (strain ATCC 23270 / DSM 14882 / CIP 104768 / NCIMB 8455) (Ferrobacillus ferrooxidans (strain ATCC 23270)).